The sequence spans 782 residues: Nezukol synthase KSL3 (782 aa).

Mg(2+) contacts are provided by aspartate 529, aspartate 533, asparagine 677, and glutamate 685. The short motif at 529–533 (DDVFD) is the DDXXD motif element.

Belongs to the terpene synthase family. Requires Mg(2+) as cofactor. Highly expressed in leaves, and, at low levels, in stems, but barely in roots and flowers.

It catalyses the reaction (+)-copalyl diphosphate = miltiradiene + diphosphate. The enzyme catalyses (+)-copalyl diphosphate + H2O = nezukol + diphosphate. It functions in the pathway secondary metabolite biosynthesis; terpenoid biosynthesis. Its function is as follows. Involved in the biosynthesis of ent-kaurene diterpenoids natural products such as oridonin, miltiradiene, eriocalyxin B and nezukol, known to exhibit antitumor, anti-inflammatory and antibacterial activities. Catalyzes the conversion of (+)-copalyl diphosphate ((+)-CPP) to nezukol and miltiradiene. The reaction mechanism proceeds via the ionization of the diphosphate group of (+)-CPP, followed by formation of an intermediary pimar-15-en-8-yl(+) carbocation and neutralization of the carbocation by water capture at C-8 to yield nezukol. Can interact with ent-copalyl diphosphate (ent-CPP) but seems unable to use it as substrate. This Isodon rubescens (Rabdosia rubescens) protein is Nezukol synthase KSL3.